The following is a 214-amino-acid chain: Large ribosomal subunit protein uL4c (214 aa).

The disordered stretch occupies residues 42–81 (VKQSNEKRQGSANTKTRSEVRGGGRKPWRQKGTGRARAGS). Residues 64–75 (GGRKPWRQKGTG) are compositionally biased toward basic residues.

It belongs to the universal ribosomal protein uL4 family. As to quaternary structure, part of the 50S ribosomal subunit.

It is found in the plastid. Its subcellular location is the chloroplast. Functionally, probably binds the 23S rRNA. The sequence is that of Large ribosomal subunit protein uL4c (rpl4) from Pyropia yezoensis (Susabi-nori).